The sequence spans 142 residues: Large ribosomal subunit protein uL11 (142 aa).

This sequence belongs to the universal ribosomal protein uL11 family. As to quaternary structure, part of the ribosomal stalk of the 50S ribosomal subunit. Interacts with L10 and the large rRNA to form the base of the stalk. L10 forms an elongated spine to which L12 dimers bind in a sequential fashion forming a multimeric L10(L12)X complex. One or more lysine residues are methylated.

Forms part of the ribosomal stalk which helps the ribosome interact with GTP-bound translation factors. This is Large ribosomal subunit protein uL11 from Bartonella henselae (strain ATCC 49882 / DSM 28221 / CCUG 30454 / Houston 1) (Rochalimaea henselae).